Here is a 127-residue protein sequence, read N- to C-terminus: MAEITKQDVIEYIEKMSVLELSELVKELEEKFGVSAAAPVAVAAAGPATADAAAAEEKTEFDVILKAAGANKINVIKVVRALTSLGLKEAKDLVDGAPGAVKTGVSKQEAEDAQKQLVEAGAEVEVK.

This sequence belongs to the bacterial ribosomal protein bL12 family. Homodimer. Part of the ribosomal stalk of the 50S ribosomal subunit. Forms a multimeric L10(L12)X complex, where L10 forms an elongated spine to which 2 to 4 L12 dimers bind in a sequential fashion. Binds GTP-bound translation factors.

Forms part of the ribosomal stalk which helps the ribosome interact with GTP-bound translation factors. Is thus essential for accurate translation. This Pelobacter propionicus (strain DSM 2379 / NBRC 103807 / OttBd1) protein is Large ribosomal subunit protein bL12.